Reading from the N-terminus, the 286-residue chain is Bifunctional protein FolD (286 aa).

Residues 165–167 (GRS) and Ser190 each bind NADP(+).

This sequence belongs to the tetrahydrofolate dehydrogenase/cyclohydrolase family. In terms of assembly, homodimer.

It carries out the reaction (6R)-5,10-methylene-5,6,7,8-tetrahydrofolate + NADP(+) = (6R)-5,10-methenyltetrahydrofolate + NADPH. The enzyme catalyses (6R)-5,10-methenyltetrahydrofolate + H2O = (6R)-10-formyltetrahydrofolate + H(+). The protein operates within one-carbon metabolism; tetrahydrofolate interconversion. Catalyzes the oxidation of 5,10-methylenetetrahydrofolate to 5,10-methenyltetrahydrofolate and then the hydrolysis of 5,10-methenyltetrahydrofolate to 10-formyltetrahydrofolate. The protein is Bifunctional protein FolD of Staphylococcus aureus (strain USA300).